The chain runs to 242 residues: ATP synthase subunit a (242 aa).

6 helical membrane-spanning segments follow: residues 29–49 (SAAY…LAFS), 84–104 (FVPV…FGMI), 114–134 (IIIT…VGFV), 140–160 (FLSL…MIII), 189–209 (VIAS…IPLM), and 210–230 (VILI…FTIL).

It belongs to the ATPase A chain family. F-type ATPases have 2 components, CF(1) - the catalytic core - and CF(0) - the membrane proton channel. CF(1) has five subunits: alpha(3), beta(3), gamma(1), delta(1), epsilon(1). CF(0) has three main subunits: a(1), b(2) and c(9-12). The alpha and beta chains form an alternating ring which encloses part of the gamma chain. CF(1) is attached to CF(0) by a central stalk formed by the gamma and epsilon chains, while a peripheral stalk is formed by the delta and b chains.

It localises to the cell inner membrane. Functionally, key component of the proton channel; it plays a direct role in the translocation of protons across the membrane. This is ATP synthase subunit a from Rickettsia bellii (strain OSU 85-389).